We begin with the raw amino-acid sequence, 864 residues long: DNA mismatch repair protein MutS (864 aa).

G607–S614 contributes to the ATP binding site.

This sequence belongs to the DNA mismatch repair MutS family.

In terms of biological role, this protein is involved in the repair of mismatches in DNA. It is possible that it carries out the mismatch recognition step. This protein has a weak ATPase activity. This Neisseria meningitidis serogroup B (strain ATCC BAA-335 / MC58) protein is DNA mismatch repair protein MutS.